Consider the following 376-residue polypeptide: Dehydrogenase/reductase SDR family member FEY (376 aa).

Ser2 bears the N-acetylserine mark. Residue 61–85 (VVTGSTSGIGRETARQLAEAGAHVV) participates in NAD(+) binding. Position 199 (Ser199) interacts with substrate. Tyr227 (proton acceptor) is an active-site residue.

This sequence belongs to the short-chain dehydrogenases/reductases (SDR) family. In terms of tissue distribution, expressed in roots, stems, leaves and flowers and, at lower levels, in siliques.

Functionally, putative oxidoreductase. Required for vegetative shoot apex development, especially during leaf positioning and for shoot apical meristem (SAM) maintenance. This Arabidopsis thaliana (Mouse-ear cress) protein is Dehydrogenase/reductase SDR family member FEY.